The primary structure comprises 285 residues: 4-diphosphocytidyl-2-C-methyl-D-erythritol kinase (285 aa).

Lys10 is an active-site residue. An ATP-binding site is contributed by 94–104 (PVAAGLGGGSS). Residue Asp136 is part of the active site.

It belongs to the GHMP kinase family. IspE subfamily.

It catalyses the reaction 4-CDP-2-C-methyl-D-erythritol + ATP = 4-CDP-2-C-methyl-D-erythritol 2-phosphate + ADP + H(+). Its pathway is isoprenoid biosynthesis; isopentenyl diphosphate biosynthesis via DXP pathway; isopentenyl diphosphate from 1-deoxy-D-xylulose 5-phosphate: step 3/6. Its function is as follows. Catalyzes the phosphorylation of the position 2 hydroxy group of 4-diphosphocytidyl-2C-methyl-D-erythritol. This Latilactobacillus sakei subsp. sakei (strain 23K) (Lactobacillus sakei subsp. sakei) protein is 4-diphosphocytidyl-2-C-methyl-D-erythritol kinase.